Reading from the N-terminus, the 234-residue chain is Thymidylate kinase (234 aa).

Residue 20-27 participates in ATP binding; it reads GIDASGKT.

This sequence belongs to the thymidylate kinase family.

It catalyses the reaction dTMP + ATP = dTDP + ADP. Phosphorylation of dTMP to form dTDP in both de novo and salvage pathways of dTTP synthesis. The protein is Thymidylate kinase of Mycoplasmopsis pulmonis (strain UAB CTIP) (Mycoplasma pulmonis).